The primary structure comprises 119 residues: UPF0738 protein BAA_1286 (119 aa).

Belongs to the UPF0738 family.

This is UPF0738 protein BAA_1286 from Bacillus anthracis (strain A0248).